The chain runs to 179 residues: Large ribosomal subunit protein uL5 (179 aa).

It belongs to the universal ribosomal protein uL5 family. In terms of assembly, part of the 50S ribosomal subunit; part of the 5S rRNA/L5/L18/L25 subcomplex. Contacts the 5S rRNA and the P site tRNA. Forms a bridge to the 30S subunit in the 70S ribosome.

This is one of the proteins that bind and probably mediate the attachment of the 5S RNA into the large ribosomal subunit, where it forms part of the central protuberance. In the 70S ribosome it contacts protein S13 of the 30S subunit (bridge B1b), connecting the 2 subunits; this bridge is implicated in subunit movement. Contacts the P site tRNA; the 5S rRNA and some of its associated proteins might help stabilize positioning of ribosome-bound tRNAs. This chain is Large ribosomal subunit protein uL5, found in Buchnera aphidicola subsp. Acyrthosiphon kondoi (Acyrthosiphon kondoi symbiotic bacterium).